Here is a 152-residue protein sequence, read N- to C-terminus: Ninjurin-1 (152 aa).

M1 carries the post-translational modification N-acetylmethionine. Residues 1 to 10 (MDPGTEEYEL) are compositionally biased toward acidic residues. The interval 1–30 (MDPGTEEYELNGDLRPGSPGSPDASPPRWG) is disordered. Topologically, residues 1–78 (MDPGTEEYEL…EQGNEFAFFV (78 aa)) are extracellular. The span at 16–27 (PGSPGSPDASPP) shows a compositional bias: low complexity. 3 positions are modified to phosphoserine: S18, S21, and S25. Residues 26-37 (PPRWGLRNRPIN) are N-terminal adhesion motif. The tract at residues 40–69 (HYANKKSAAESMLDIALLMANASQLKAVVE) is required to induce plasma membrane rupture. Residues 44–55 (KKSAAESMLDIA) are helix alpha1. The segment at 58–74 (MANASQLKAVVEQGNEF) is helix alpha2. N-linked (GlcNAc...) asparagine glycosylation occurs at N60. Residues 79-103 (PLVVLISISLVLQIGVGVLLIFLVK) form a helical membrane-spanning segment. Residues 104–113 (YDLNNPAKHA) are Cytoplasmic-facing. The chain crosses the membrane as a helical span at residues 114 to 138 (KLDFLNNLATGLVFIIVVVNIFITA). Topologically, residues 139–152 (FGVQKPVMDVAPRQ) are extracellular.

Belongs to the ninjurin family. As to quaternary structure, homodimer; in absence of death stimuli, forms an inactive homodimer. Homooligomer; in response to death stimuli, homooligomerizes into long, highly branched filaments and large, ring-shaped structures in the membrane. The topology shown in the entry corresponds to the activated form. Post-translationally, cleaved by MMP9 protease to generate the Secreted ninjurin-1 form. In terms of processing, N-linked glycosylation is required for homooligomerization.

Its subcellular location is the cell membrane. It localises to the synaptic cell membrane. The protein localises to the secreted. In response to death stimuli, homooligomerizes and disrupts membrane integrity by introducing the hydrophilic faces of alpha1 and alpha2 helices into the hydrophobic membrane. Homooligomerization and ability to mediate plasma membrane rupture is inhibited by glycine; it is unclear whether glycine directly or indirectly inhibits homooligomerization. In normal conditions, NINJ1 is autoinhibited via formation of a homodimer: in the inactive homodimer, the alpha1 and alpha2 helices (residues 44-74) form a single transmembrane region without a kink, in which hydrophilic faces of alpha1 and alpha2 helices are sequestered. Functionally, effector of various programmed cell death, such as pyroptosis and necroptosis, which mediates plasma membrane rupture (cytolysis). Oligomerizes in response to death stimuli and forms ring-like structures on the plasma membrane: acts by cutting and shedding membrane disks, like a cookie cutter, leading to membrane damage and loss that cannot be repaired by the cell. Plasma membrane rupture leads to release intracellular molecules named damage-associated molecular patterns (DAMPs) that propagate the inflammatory response. Mechanistically, mediates plasma membrane rupture by introducing hydrophilic faces of 2 alpha helices into the hydrophobic membrane. Induces plasma membrane rupture downstream of Gasdermin (GSDMA, GSDMB, GSDMC, GSDMD, or GSDME) or MLKL during pyroptosis or necroptosis, respectively. Acts as an effector of PANoptosis downstream of CASP1, CASP4, CASP8 and RIPK3. Also induces plasma membrane rupture in response to cell swelling caused by osmotic stress and ferroptosis downstream of lipid peroxidation. Acts as a regulator of Toll-like receptor 4 (TLR4) signaling triggered by lipopolysaccharide (LPS) during systemic inflammation; directly binds LPS. Involved in leukocyte migration during inflammation by promoting transendothelial migration of macrophages via homotypic binding. Promotes the migration of monocytes across the brain endothelium to central nervous system inflammatory lesions. Also acts as a homophilic transmembrane adhesion molecule involved in various processes such as axonal growth, cell chemotaxis and angiogenesis. Promotes cell adhesion by mediating homophilic interactions via its extracellular N-terminal adhesion motif (N-NAM). Involved in the progression of the inflammatory stress by promoting cell-to-cell interactions between immune cells and endothelial cells. Plays a role in nerve regeneration by promoting maturation of Schwann cells. Acts as a regulator of angiogenesis. Promotes the formation of new vessels by mediating the interaction between capillary pericyte cells and endothelial cells. Promotes osteoclasts development by enhancing the survival of prefusion osteoclasts. Also involved in striated muscle growth and differentiation. Secreted form generated by cleavage, which has chemotactic activity. Acts as an anti-inflammatory mediator by promoting monocyte recruitment, thereby ameliorating atherosclerosis. In Rattus norvegicus (Rat), this protein is Ninjurin-1.